A 773-amino-acid chain; its full sequence is Ethylene receptor 2 (773 aa).

The next 4 helical transmembrane spans lie at 4–24, 53–73, 82–102, and 122–142; these read EIAS…VLAI, VSDF…LYFV, WVLF…LLHG, and LTAL…PLLL. Cu cation-binding residues include Cys94 and His98. Positions 187–331 constitute a GAF domain; sequence DRHTILYTTL…VVADQVTVAL (145 aa). The 241-residue stretch at 374 to 614 folds into the Histidine kinase domain; sequence TMSEGMRRPM…PETMSLLLRF (241 aa). The 120-residue stretch at 647–766 folds into the Response regulatory domain; sequence QVLLVDTNDS…AMESELRRVL (120 aa). Asp702 carries the post-translational modification 4-aspartylphosphate. Residue Lys751 forms a Glycyl lysine isopeptide (Lys-Gly) (interchain with G-Cter in ubiquitin) linkage.

This sequence belongs to the ethylene receptor family. In terms of assembly, heteromer with ETR1. Binds to MRF3/ECIP1. It depends on Cu cation as a cofactor. Post-translationally, autophosphorylated predominantly on Ser residues. Expressed in seedlings, roots, leaves, flowers, mature siliques, shoot apical meristems, leaf primordia, inflorescence meristems, young floral meristems, developing petals, carpels and ovules. Low expression in stamens.

It is found in the endoplasmic reticulum membrane. Ethylene receptor related to bacterial two-component regulators. Acts as a redundant negative regulator of ethylene signaling. The polypeptide is Ethylene receptor 2 (Arabidopsis thaliana (Mouse-ear cress)).